Reading from the N-terminus, the 125-residue chain is GNERFRCPETLFQPSFIGMESAGIHETTYNSIMKCDIDIRKDLYANNVMSGGTTMYPGIADRMQKEITALAPSTMKIKIIAPPERKYSVWIGGSILASLSTFQQMWITKQEYDEAGPSIVHRKCF.

Belongs to the actin family. As to quaternary structure, polymerization of globular actin (G-actin) leads to a structural filament (F-actin) in the form of a two-stranded helix. Each actin can bind to 4 others. Post-translationally, methylated at His-75 by SETD3.

Its subcellular location is the cytoplasm. It is found in the cytoskeleton. In terms of biological role, actins are highly conserved proteins that are involved in various types of cell motility and are ubiquitously expressed in all eukaryotic cells. This is Actin, alpha skeletal muscle from Pleurodeles waltl (Iberian ribbed newt).